We begin with the raw amino-acid sequence, 449 residues long: MMLSKIINNISKSGLRNTTNSKNGGLLYFQNYYMKSSTTITRLNSGNNNYSNNNNNNNNIILNDKFLNKQQNDKKIIYNNIFEEKNQFLKRIYSTSTTTTSTTTTTNINENNIKNENNNENNNENSNNNNEQSIKSNQTKSKGFLRGPYMTLIKLPITVYVTLTAIAGYVAACPIGAFDWVVLSQVSIGTFLASCSANIHNQEIEVQHDRKMPRTKDRPLVIGTINRGKAWVGSIALLTLGFGTMAVTPSLFVPGTLAACNVILYCWYTDLKRVTPLNTWIGAFVGAIPPLIGSVAATGEFEAIGMLLATFMYIWQIPHFLALSQVLREQYRGAGYKMLSVTHEKKTVDRVSLAHALFGIPLPFIFDYFFNFNVHPITLTCMALSSASLALPFITKISPKRLYIISLISLPITLFLSCLLRQPFAYYTDDDDEDKDKDNQNQIENQDKK.

Over residues 99–138 (TTSTTTTTNINENNIKNENNNENNNENSNNNNEQSIKSNQ) the composition is skewed to low complexity. Residues 99–140 (TTSTTTTTNINENNIKNENNNENNNENSNNNNEQSIKSNQTK) are disordered. 7 helical membrane passes run 163–183 (LTAI…WVVL), 245–267 (MAVT…LYCW), 279–299 (TWIG…AATG), 303–323 (AIGM…FLAL), 352–372 (SLAH…FFNF), 374–394 (VHPI…LPFI), and 402–422 (LYII…LLRQ).

The protein belongs to the UbiA prenyltransferase family.

It localises to the mitochondrion membrane. In terms of biological role, converts protoheme IX and farnesyl diphosphate to heme O. This Dictyostelium discoideum (Social amoeba) protein is Probable protoheme IX farnesyltransferase, mitochondrial (cox10).